The sequence spans 467 residues: Cysteine--tRNA ligase (467 aa).

A Zn(2+)-binding site is contributed by cysteine 28. Residues 30–40 (MTVYDYCHLGH) carry the 'HIGH' region motif. Cysteine 209, histidine 234, and glutamate 238 together coordinate Zn(2+). The 'KMSKS' region signature appears at 266–270 (KMSKS). Lysine 269 contacts ATP.

The protein belongs to the class-I aminoacyl-tRNA synthetase family. Monomer. Zn(2+) is required as a cofactor.

It localises to the cytoplasm. The enzyme catalyses tRNA(Cys) + L-cysteine + ATP = L-cysteinyl-tRNA(Cys) + AMP + diphosphate. This Hahella chejuensis (strain KCTC 2396) protein is Cysteine--tRNA ligase.